A 259-amino-acid polypeptide reads, in one-letter code: 1,2-dihydroxy-1,2-dihydronaphthalene dehydrogenase (259 aa).

8–32 (SITGAGSGIGLELVRSFKSAGYYVS) provides a ligand contact to NAD(+). A substrate-binding site is contributed by serine 140. Tyrosine 153 serves as the catalytic Proton acceptor.

The protein belongs to the short-chain dehydrogenases/reductases (SDR) family.

It catalyses the reaction (1R,2S)-1,2-dihydronaphthalene-1,2-diol + NAD(+) = naphthalene-1,2-diol + NADH + H(+). The enzyme catalyses cis-1,2-dihydroxy-1,2-dihydrodibenzothiophene + NAD(+) = 1,2-dihydroxydibenzothiophene + NADH + H(+). Its pathway is aromatic compound metabolism; naphthalene degradation. Catalyzes the oxidation of naphthalene dihydrodiol into 1,2-dihydroxynaphthalene. This Pseudomonas sp. (strain C18) protein is 1,2-dihydroxy-1,2-dihydronaphthalene dehydrogenase (doxE).